The chain runs to 291 residues: Popeye domain-containing protein 3 (291 aa).

An N-linked (GlcNAc...) asparagine glycan is attached at Asn-4. A run of 3 helical transmembrane segments spans residues 27–44, 48–70, and 77–99; these read GAIY…FMGG, FGLL…WAWV, and IFSW…AYQV.

The protein belongs to the popeye family. In terms of tissue distribution, expressed predominantly in skeletal muscle (at protein level). Also detected in heart.

It is found in the membrane. In terms of biological role, may play a role in the maintenance of heart function mediated, at least in part, through cAMP-binding. May play a role in the regulation of KCNK2/TREK-1-mediated current amplitude. This is Popeye domain-containing protein 3 (POPDC3) from Homo sapiens (Human).